A 94-amino-acid chain; its full sequence is Selenoprotein K (94 aa).

Residues 20 to 42 (VSFLTDFFWGIAEFVVFFFKTLL) form a helical membrane-spanning segment. The segment at 46–94 (VKKRRGYGSSSDSRYDDGRGPPGNPPRRMGRISHLRGPSPPPMAGGUGR) is disordered. Residue selenocysteine 92 is a non-standard amino acid, selenocysteine.

This sequence belongs to the selenoprotein K family. As to quaternary structure, interacts with DERL1, DERL2, DERL3 and SELENOS. The SELENOK-SELENOS complex interacts with VCP. Interacts with ZDHHC6. Post-translationally, cleaved by CAPN2/m-calpain in resting macrophages but not in activated macrophages. Macrophage activation up-regulates expression of the calpain inhibitor CAST/calpastatin, resulting in inhibition of CAPN2 activity. Truncated SELENOK proteins produced by failed UGA/Sec decoding are ubiquitinated by the CRL2(KLHDC2) complex, which recognizes the diglycine (Gly-Gly) at the C-terminus of truncated SELENOK proteins. High expression in spleen and intestine (at protein level). Expressed in a range of immune cells including T and B-cells and also in myeloid cells including macrophages, neutrophils and dendritic cells (at protein level).

The protein localises to the endoplasmic reticulum membrane. The protein resides in the cell membrane. Its function is as follows. Required for Ca(2+) flux in immune cells and plays a role in T-cell proliferation and in T-cell and neutrophil migration. Involved in endoplasmic reticulum-associated degradation (ERAD) of soluble glycosylated proteins. Required for palmitoylation and cell surface expression of CD36 and involved in macrophage uptake of low-density lipoprotein and in foam cell formation. Together with ZDHHC6, required for palmitoylation of ITPR1 in immune cells, leading to regulate ITPR1 stability and function. Plays a role in protection of cells from ER stress-induced apoptosis. Protects cells from oxidative stress when overexpressed in cardiomyocytes. This Mus musculus (Mouse) protein is Selenoprotein K.